The following is a 130-amino-acid chain: DNA-directed RNA polymerase subunit omega (130 aa).

The disordered stretch occupies residues 109–130 (EEELLKGLEGLAPPEEQPEEDE).

It belongs to the RNA polymerase subunit omega family. The RNAP catalytic core consists of 2 alpha, 1 beta, 1 beta' and 1 omega subunit. When a sigma factor is associated with the core the holoenzyme is formed, which can initiate transcription.

The catalysed reaction is RNA(n) + a ribonucleoside 5'-triphosphate = RNA(n+1) + diphosphate. Promotes RNA polymerase assembly. Latches the N- and C-terminal regions of the beta' subunit thereby facilitating its interaction with the beta and alpha subunits. The sequence is that of DNA-directed RNA polymerase subunit omega from Rhodopseudomonas palustris (strain BisB5).